Consider the following 491-residue polypeptide: 2,3-bisphosphoglycerate-independent phosphoglycerate mutase (491 aa).

Mn(2+)-binding residues include Asp11 and Ser61. Ser61 acts as the Phosphoserine intermediate in catalysis. Substrate contacts are provided by residues His118, Arg147–Asp148, Arg177, Arg183, Arg248–Arg251, and Lys320. 5 residues coordinate Mn(2+): Asp386, His390, Asp427, His428, and His445.

This sequence belongs to the BPG-independent phosphoglycerate mutase family. Monomer. Mn(2+) is required as a cofactor.

It catalyses the reaction (2R)-2-phosphoglycerate = (2R)-3-phosphoglycerate. Its pathway is carbohydrate degradation; glycolysis; pyruvate from D-glyceraldehyde 3-phosphate: step 3/5. In terms of biological role, catalyzes the interconversion of 2-phosphoglycerate and 3-phosphoglycerate. The polypeptide is 2,3-bisphosphoglycerate-independent phosphoglycerate mutase (Sulfurimonas denitrificans (strain ATCC 33889 / DSM 1251) (Thiomicrospira denitrificans (strain ATCC 33889 / DSM 1251))).